The following is a 257-amino-acid chain: 3-deoxy-manno-octulosonate cytidylyltransferase (257 aa).

The protein belongs to the KdsB family.

The protein resides in the cytoplasm. It catalyses the reaction 3-deoxy-alpha-D-manno-oct-2-ulosonate + CTP = CMP-3-deoxy-beta-D-manno-octulosonate + diphosphate. Its pathway is nucleotide-sugar biosynthesis; CMP-3-deoxy-D-manno-octulosonate biosynthesis; CMP-3-deoxy-D-manno-octulosonate from 3-deoxy-D-manno-octulosonate and CTP: step 1/1. The protein operates within bacterial outer membrane biogenesis; lipopolysaccharide biosynthesis. In terms of biological role, activates KDO (a required 8-carbon sugar) for incorporation into bacterial lipopolysaccharide in Gram-negative bacteria. This Xylella fastidiosa (strain M12) protein is 3-deoxy-manno-octulosonate cytidylyltransferase.